Consider the following 419-residue polypeptide: Adenylosuccinate synthetase (419 aa).

GTP is bound by residues Gly-15–Lys-21 and Gly-43–Thr-45. Asp-16 functions as the Proton acceptor in the catalytic mechanism. Mg(2+)-binding residues include Asp-16 and Gly-43. Residues Asp-16–Lys-19, Asn-41–His-44, Thr-128, Arg-142, Gln-223, Thr-238, and Arg-302 each bind IMP. His-44 acts as the Proton donor in catalysis. Thr-298–Arg-304 serves as a coordination point for substrate. GTP contacts are provided by residues Arg-304, Lys-330–Asp-332, and Ser-408–Ser-410.

Belongs to the adenylosuccinate synthetase family. Homodimer. The cofactor is Mg(2+).

It is found in the cytoplasm. It carries out the reaction IMP + L-aspartate + GTP = N(6)-(1,2-dicarboxyethyl)-AMP + GDP + phosphate + 2 H(+). The protein operates within purine metabolism; AMP biosynthesis via de novo pathway; AMP from IMP: step 1/2. Its function is as follows. Plays an important role in the de novo pathway of purine nucleotide biosynthesis. Catalyzes the first committed step in the biosynthesis of AMP from IMP. This chain is Adenylosuccinate synthetase, found in Sulfurimonas denitrificans (strain ATCC 33889 / DSM 1251) (Thiomicrospira denitrificans (strain ATCC 33889 / DSM 1251)).